The primary structure comprises 280 residues: MASLGVSEMLGTPLNFRAVSRSSAPLASSPSTFKTVALFSKKKPAPAKSKAVSETSDELAKWYGPDRRIFLPDGLLDRSEIPEYLNGEVAGDYGYDPFGLGKKPENFAKYQAFELIHARWAMLGAAGFIIPEALNKYGANCGPEAVWFKTGALLLDGNTLNYFGKNIPINLVLAVVAEVVLLGGAEYYRITNGLDFEDKLHPGGPFDPLGLAKDPEQGALLKVKEIKNGRLAMFAMLGFFIQAYVTGEGPVENLAKHLSDPFGNNLLTVIAGTAERAPTL.

The transit peptide at 1 to 48 directs the protein to the chloroplast; the sequence is MASLGVSEMLGTPLNFRAVSRSSAPLASSPSTFKTVALFSKKKPAPAK. Phe70 contacts chlorophyll b. Tyr95, Glu114, and His117 together coordinate chlorophyll a. Helical transmembrane passes span 110-130 and 167-187; these read YQAF…GFII and IPIN…GAEY. Residues Arg119, Ile167, Glu186, and Arg189 each coordinate chlorophyll b. Residues Lys224, Glu225, Asn228, Arg230, Gln242, and His257 each contribute to the chlorophyll a site. The chain crosses the membrane as a helical span at residues 231 to 251; that stretch reads LAMFAMLGFFIQAYVTGEGPV.

Belongs to the light-harvesting chlorophyll a/b-binding (LHC) protein family. As to quaternary structure, forms heterotrimers with LHCB3. The LHC complex consists of chlorophyll a-b binding proteins. Requires Binds at least 14 chlorophylls (8 Chl-a and 6 Chl-b) and carotenoids such as lutein and neoxanthin. as cofactor. Photoregulated by reversible phosphorylation of its threonine residues.

It localises to the plastid. It is found in the chloroplast thylakoid membrane. In terms of biological role, the light-harvesting complex (LHC) functions as a light receptor, it captures and delivers excitation energy to photosystems with which it is closely associated. The chain is Chlorophyll a-b binding protein CP26, chloroplastic (LHCB5) from Arabidopsis thaliana (Mouse-ear cress).